The following is a 226-amino-acid chain: 7-cyano-7-deazaguanine synthase (226 aa).

Residue Leu-9–Thr-19 coordinates ATP. Zn(2+) contacts are provided by Cys-192, Cys-200, Cys-203, and Cys-206.

Belongs to the QueC family. The cofactor is Zn(2+).

It catalyses the reaction 7-carboxy-7-deazaguanine + NH4(+) + ATP = 7-cyano-7-deazaguanine + ADP + phosphate + H2O + H(+). The protein operates within purine metabolism; 7-cyano-7-deazaguanine biosynthesis. Its function is as follows. Catalyzes the ATP-dependent conversion of 7-carboxy-7-deazaguanine (CDG) to 7-cyano-7-deazaguanine (preQ(0)). This chain is 7-cyano-7-deazaguanine synthase, found in Methanosphaera stadtmanae (strain ATCC 43021 / DSM 3091 / JCM 11832 / MCB-3).